The chain runs to 589 residues: ATP-dependent lipid A-core flippase (589 aa).

The next 5 membrane-spanning stretches (helical) occupy residues 29–49, 70–90, 157–177, 261–281, and 283–303; these read LLLV…TGFL, WLPV…YITD, VIGA…TILV, MIGA…ALAG, and LTAG…PGLK. Positions 32 to 314 constitute an ABC transmembrane type-1 domain; it reads VAALIAALIE…LTNVQNMVQR (283 aa). An ABC transporter domain is found at 346-582; it reads IEFRDVTARY…GGLYSHLHGM (237 aa). 380–387 lines the ATP pocket; the sequence is GRSGSGKS.

The protein belongs to the ABC transporter superfamily. Lipid exporter (TC 3.A.1.106) family. Homodimer.

Its subcellular location is the cell inner membrane. It catalyses the reaction ATP + H2O + lipid A-core oligosaccharideSide 1 = ADP + phosphate + lipid A-core oligosaccharideSide 2.. Functionally, involved in lipopolysaccharide (LPS) biosynthesis. Translocates lipid A-core from the inner to the outer leaflet of the inner membrane. Transmembrane domains (TMD) form a pore in the inner membrane and the ATP-binding domain (NBD) is responsible for energy generation. In Xanthomonas campestris pv. campestris (strain 8004), this protein is ATP-dependent lipid A-core flippase.